The following is a 331-amino-acid chain: Very-long-chain 3-oxoacyl-CoA reductase (331 aa).

The helical transmembrane segment at 15–35 (VQWALAGVGALYISAKVLSYL) threads the bilayer. The NADP(+) site is built by Val60, Asp115, Asp123, Asn142, Tyr209, Lys213, Ile242, and Ser244. Catalysis depends on Tyr209, which acts as the Proton donor. Residue Lys213 is the Lowers pKa of active site Tyr of the active site.

Belongs to the short-chain dehydrogenases/reductases (SDR) family.

It is found in the endoplasmic reticulum membrane. It carries out the reaction a very-long-chain (3R)-3-hydroxyacyl-CoA + NADP(+) = a very-long-chain 3-oxoacyl-CoA + NADPH + H(+). It participates in lipid metabolism; fatty acid biosynthesis. In terms of biological role, component of the microsomal membrane bound fatty acid elongation system, which produces the 26-carbon very long-chain fatty acids (VLCFA) from palmitate. Catalyzes the reduction of the 3-ketoacyl-CoA intermediate that is formed in each cycle of fatty acid elongation. VLCFAs serve as precursors for ceramide and sphingolipids. This is Very-long-chain 3-oxoacyl-CoA reductase from Pyricularia oryzae (strain 70-15 / ATCC MYA-4617 / FGSC 8958) (Rice blast fungus).